Here is a 361-residue protein sequence, read N- to C-terminus: Phosphoserine aminotransferase (361 aa).

Arg42 is an L-glutamate binding site. Pyridoxal 5'-phosphate is bound by residues 76 to 77 (AR), Trp102, Thr153, Asp173, and Gln196. Lys197 carries the post-translational modification N6-(pyridoxal phosphate)lysine. Pyridoxal 5'-phosphate is bound at residue 238–239 (NT).

Belongs to the class-V pyridoxal-phosphate-dependent aminotransferase family. SerC subfamily. As to quaternary structure, homodimer. Pyridoxal 5'-phosphate serves as cofactor.

Its subcellular location is the cytoplasm. It catalyses the reaction O-phospho-L-serine + 2-oxoglutarate = 3-phosphooxypyruvate + L-glutamate. The catalysed reaction is 4-(phosphooxy)-L-threonine + 2-oxoglutarate = (R)-3-hydroxy-2-oxo-4-phosphooxybutanoate + L-glutamate. It functions in the pathway amino-acid biosynthesis; L-serine biosynthesis; L-serine from 3-phospho-D-glycerate: step 2/3. Its pathway is cofactor biosynthesis; pyridoxine 5'-phosphate biosynthesis; pyridoxine 5'-phosphate from D-erythrose 4-phosphate: step 3/5. Catalyzes the reversible conversion of 3-phosphohydroxypyruvate to phosphoserine and of 3-hydroxy-2-oxo-4-phosphonooxybutanoate to phosphohydroxythreonine. This Buchnera aphidicola subsp. Acyrthosiphon pisum (strain 5A) protein is Phosphoserine aminotransferase.